Consider the following 405-residue polypeptide: Phosphoglycerate kinase (405 aa).

Residues 24-26, Arg40, 63-66, Arg122, and Arg162 each bind substrate; these read DFN and HLGR. ATP is bound by residues Lys212, Glu331, and 361-364; that span reads GGDS.

Belongs to the phosphoglycerate kinase family. As to quaternary structure, monomer.

The protein resides in the cytoplasm. It catalyses the reaction (2R)-3-phosphoglycerate + ATP = (2R)-3-phospho-glyceroyl phosphate + ADP. Its pathway is carbohydrate degradation; glycolysis; pyruvate from D-glyceraldehyde 3-phosphate: step 2/5. The polypeptide is Phosphoglycerate kinase (Corynebacterium efficiens (strain DSM 44549 / YS-314 / AJ 12310 / JCM 11189 / NBRC 100395)).